We begin with the raw amino-acid sequence, 229 residues long: ATP-dependent dethiobiotin synthetase BioD (229 aa).

Position 12–17 (12–17 (GVGKTV)) interacts with ATP. Position 16 (Thr16) interacts with Mg(2+). The active site involves Lys37. Thr41 contributes to the substrate binding site. ATP is bound by residues Asp53, 112 to 115 (EGAG), and 201 to 203 (PAG). Mg(2+) is bound by residues Asp53 and Glu112.

This sequence belongs to the dethiobiotin synthetase family. In terms of assembly, homodimer. Requires Mg(2+) as cofactor.

It localises to the cytoplasm. The enzyme catalyses (7R,8S)-7,8-diammoniononanoate + CO2 + ATP = (4R,5S)-dethiobiotin + ADP + phosphate + 3 H(+). Its pathway is cofactor biosynthesis; biotin biosynthesis; biotin from 7,8-diaminononanoate: step 1/2. Catalyzes a mechanistically unusual reaction, the ATP-dependent insertion of CO2 between the N7 and N8 nitrogen atoms of 7,8-diaminopelargonic acid (DAPA, also called 7,8-diammoniononanoate) to form a ureido ring. The protein is ATP-dependent dethiobiotin synthetase BioD of Mycobacterium sp. (strain KMS).